We begin with the raw amino-acid sequence, 123 residues long: Antitoxin RnlB (123 aa).

Can form a complex with cognate toxin RnlA. Probably degraded by CplXP and Lon proteases.

Functionally, antitoxin component of a type II toxin-antitoxin (TA) system. A labile antitoxin (half-life of 2.1 minutes) that inhibits the endonuclease activity of cognate toxin RnlA but not that of non-cognate toxin LsoA. This chain is Antitoxin RnlB (rnlB), found in Escherichia coli (strain K12).